The chain runs to 393 residues: Methylthioribose kinase (393 aa).

Residues Asn-38, Lys-53, and 107 to 109 (EDL) contribute to the ATP site. Asp-225 is a binding site for substrate. 242–244 (DPE) contributes to the ATP binding site. Arg-332 is a binding site for substrate.

It belongs to the methylthioribose kinase family. As to quaternary structure, homodimer.

The enzyme catalyses 5-(methylsulfanyl)-D-ribose + ATP = 5-(methylsulfanyl)-alpha-D-ribose 1-phosphate + ADP + H(+). It functions in the pathway amino-acid biosynthesis; L-methionine biosynthesis via salvage pathway; S-methyl-5-thio-alpha-D-ribose 1-phosphate from S-methyl-5'-thioadenosine (hydrolase route): step 2/2. Catalyzes the phosphorylation of methylthioribose into methylthioribose-1-phosphate. This chain is Methylthioribose kinase, found in Bacillus cereus (strain AH187).